We begin with the raw amino-acid sequence, 316 residues long: Methionyl-tRNA formyltransferase (316 aa).

(6S)-5,6,7,8-tetrahydrofolate is bound at residue 111–114 (GLLP).

It belongs to the Fmt family.

It catalyses the reaction L-methionyl-tRNA(fMet) + (6R)-10-formyltetrahydrofolate = N-formyl-L-methionyl-tRNA(fMet) + (6S)-5,6,7,8-tetrahydrofolate + H(+). Attaches a formyl group to the free amino group of methionyl-tRNA(fMet). The formyl group appears to play a dual role in the initiator identity of N-formylmethionyl-tRNA by promoting its recognition by IF2 and preventing the misappropriation of this tRNA by the elongation apparatus. In Chlamydia trachomatis serovar L2b (strain UCH-1/proctitis), this protein is Methionyl-tRNA formyltransferase.